The sequence spans 195 residues: Glucagon family neuropeptides (195 aa).

The signal sequence occupies residues 1-20 (MAKSSRATLALLIYGILMRY). The propeptide occupies 21–82 (SQCTPIGMGF…YYPPERRAET (62 aa)). The tract at residues 113 to 132 (VGEEEEDEEDSEPLSKRHSD) is disordered. Residues 115 to 124 (EEEEDEEDSE) show a composition bias toward acidic residues. Lys167 is modified (lysine amide). A propeptide spanning residues 171–195 (LVVPSVWTGIRDTVIITPEKRGKRY) is cleaved from the precursor.

The protein belongs to the glucagon family. As to expression, brain, testis, ovary and stomach. Not pancreas, pituitary, muscle and liver.

It localises to the secreted. Its function is as follows. Primary role of GHRH is to release GH from the pituitary. In terms of biological role, PACAP plays pivotal roles as a neurotransmitter and/or a neuromodulator. The polypeptide is Glucagon family neuropeptides (Clarias macrocephalus (Bighead catfish)).